We begin with the raw amino-acid sequence, 330 residues long: Beta-hexosaminidase (330 aa).

Residues Asp62, Arg70, Arg130, and 160 to 161 (KH) each bind substrate. The active-site Proton donor/acceptor is the His173. The active-site Nucleophile is Asp242.

The protein belongs to the glycosyl hydrolase 3 family. NagZ subfamily. As to quaternary structure, monomer.

Its subcellular location is the cytoplasm. The enzyme catalyses Hydrolysis of terminal non-reducing N-acetyl-D-hexosamine residues in N-acetyl-beta-D-hexosaminides.. The protein operates within cell wall biogenesis; peptidoglycan recycling. Its function is as follows. Plays a role in peptidoglycan recycling by cleaving the terminal beta-1,4-linked N-acetylglucosamine (GlcNAc) from peptide-linked peptidoglycan fragments, giving rise to free GlcNAc, anhydro-N-acetylmuramic acid and anhydro-N-acetylmuramic acid-linked peptides. Plays a role in beta-lactam antibiotic resistance via its role in generating anhydro-N-acetylmuramic acid-linked peptides; these peptides function as signaling molecules that induce high-level expression of the beta-lactamase AmpC. The polypeptide is Beta-hexosaminidase (Vibrio cholerae serotype O1 (strain ATCC 39315 / El Tor Inaba N16961)).